The chain runs to 541 residues: Cyclin-T1-4 (541 aa).

Residues 277-366 (VSEVESSVGG…KSRSGVEAPG (90 aa)) are disordered. Residues 307 to 325 (SDNLGGSTKATQNRSNDNG) show a composition bias toward polar residues. Basic and acidic residues predominate over residues 336-354 (QKGERDTETKDSMHTESHP). At Ser396 the chain carries Phosphoserine. The tract at residues 445–541 (EDDKDIQNKS…REPRRHSQER (97 aa)) is disordered. Positions 493-511 (MESPCEKQLGEGKRRHDNS) are enriched in basic and acidic residues. The segment covering 519-528 (KTNPGGSSHS) has biased composition (polar residues). The span at 529–541 (YGDREPRRHSQER) shows a compositional bias: basic and acidic residues.

Belongs to the cyclin family. Cyclin T subfamily.

In Arabidopsis thaliana (Mouse-ear cress), this protein is Cyclin-T1-4 (CYCT1-4).